The sequence spans 246 residues: Phosphatidylserine decarboxylase proenzyme (246 aa).

Serine 204 (schiff-base intermediate with substrate; via pyruvic acid) is an active-site residue. At serine 204 the chain carries Pyruvic acid (Ser); by autocatalysis.

The protein belongs to the phosphatidylserine decarboxylase family. PSD-A subfamily. In terms of assembly, heterodimer of a large membrane-associated beta subunit and a small pyruvoyl-containing alpha subunit. Pyruvate serves as cofactor. In terms of processing, is synthesized initially as an inactive proenzyme. Formation of the active enzyme involves a self-maturation process in which the active site pyruvoyl group is generated from an internal serine residue via an autocatalytic post-translational modification. Two non-identical subunits are generated from the proenzyme in this reaction, and the pyruvate is formed at the N-terminus of the alpha chain, which is derived from the carboxyl end of the proenzyme. The post-translation cleavage follows an unusual pathway, termed non-hydrolytic serinolysis, in which the side chain hydroxyl group of the serine supplies its oxygen atom to form the C-terminus of the beta chain, while the remainder of the serine residue undergoes an oxidative deamination to produce ammonia and the pyruvoyl prosthetic group on the alpha chain.

The protein resides in the cell membrane. The enzyme catalyses a 1,2-diacyl-sn-glycero-3-phospho-L-serine + H(+) = a 1,2-diacyl-sn-glycero-3-phosphoethanolamine + CO2. The protein operates within phospholipid metabolism; phosphatidylethanolamine biosynthesis; phosphatidylethanolamine from CDP-diacylglycerol: step 2/2. Functionally, catalyzes the formation of phosphatidylethanolamine (PtdEtn) from phosphatidylserine (PtdSer). The chain is Phosphatidylserine decarboxylase proenzyme from Zymomonas mobilis subsp. mobilis (strain ATCC 31821 / ZM4 / CP4).